We begin with the raw amino-acid sequence, 92 residues long: Bombyxin A-9 (92 aa).

Residues 1–19 (MKLLLAIALMLTTVMWAST) form the signal peptide. At Q20 the chain carries Pyrrolidone carboxylic acid. Cystine bridges form between C29–C79, C41–C92, and C78–C83. Residues 50 to 71 (SDAQFASYGSAWLMPYSEGRDQ) constitute a propeptide, c peptide like.

Belongs to the insulin family. As to quaternary structure, heterodimer of a B chain and an A chain linked by two disulfide bonds.

It localises to the secreted. Functionally, brain peptide responsible for activation of prothoracic glands to produce ecdysone in insects. The sequence is that of Bombyxin A-9 (BBXA9) from Bombyx mori (Silk moth).